The primary structure comprises 133 residues: Glutaredoxin-C4, chloroplastic (133 aa).

Residues 1 to 13 show a composition bias toward low complexity; it reads MGMAQSSSSSSRP. The disordered stretch occupies residues 1-25; the sequence is MGMAQSSSSSSRPSDSEQLEEPSKP. The N-terminal 27 residues, 1–27, are a transit peptide targeting the chloroplast; that stretch reads MGMAQSSSSSSRPSDSEQLEEPSKPVM. Residues 29 to 129 form the Glutaredoxin domain; the sequence is LDKAKEIVAS…PLLTEAGAIA (101 aa). C49 and C52 are oxidised to a cystine.

This sequence belongs to the glutaredoxin family. CPYC subfamily.

The protein resides in the plastid. Its subcellular location is the chloroplast. Has a glutathione-disulfide oxidoreductase activity in the presence of NADPH and glutathione reductase. Reduces low molecular weight disulfides and proteins. The polypeptide is Glutaredoxin-C4, chloroplastic (GRXC4) (Oryza sativa subsp. japonica (Rice)).